The following is a 323-amino-acid chain: Ferrochelatase (323 aa).

Residues His-196 and Glu-277 each contribute to the Fe cation site.

It belongs to the ferrochelatase family.

Its subcellular location is the cytoplasm. It carries out the reaction heme b + 2 H(+) = protoporphyrin IX + Fe(2+). The protein operates within porphyrin-containing compound metabolism; protoheme biosynthesis; protoheme from protoporphyrin-IX: step 1/1. Its function is as follows. Catalyzes the ferrous insertion into protoporphyrin IX. The chain is Ferrochelatase from Haemophilus influenzae (strain 86-028NP).